A 122-amino-acid chain; its full sequence is Large ribosomal subunit protein bL12 (122 aa).

Belongs to the bacterial ribosomal protein bL12 family. As to quaternary structure, homodimer. Part of the ribosomal stalk of the 50S ribosomal subunit. Forms a multimeric L10(L12)X complex, where L10 forms an elongated spine to which 2 to 4 L12 dimers bind in a sequential fashion. Binds GTP-bound translation factors.

Functionally, forms part of the ribosomal stalk which helps the ribosome interact with GTP-bound translation factors. Is thus essential for accurate translation. This Mycoplasma genitalium (strain ATCC 33530 / DSM 19775 / NCTC 10195 / G37) (Mycoplasmoides genitalium) protein is Large ribosomal subunit protein bL12.